The sequence spans 347 residues: HTH-type transcriptional regulator PhcA (347 aa).

The HTH lysR-type domain occupies methionine 1–threonine 61. Residues alanine 21–glycine 40 constitute a DNA-binding region (H-T-H motif). The interval proline 316–valine 347 is disordered. Basic and acidic residues predominate over residues aspartate 325–valine 347.

Belongs to the LysR transcriptional regulatory family.

Regulates the transcription of one or more of the genes involved in virulence. In Ralstonia nicotianae (strain ATCC BAA-1114 / GMI1000) (Ralstonia solanacearum), this protein is HTH-type transcriptional regulator PhcA (phcA).